The following is a 919-amino-acid chain: Sarcosine dehydrogenase, mitochondrial (919 aa).

Residues 1–22 (MASLSRVLRVAATCPRGRAAWN) constitute a mitochondrion transit peptide. At Lys-38 the chain carries N6-succinyllysine. His-109 bears the Tele-8alpha-FAD histidine mark. Residue Lys-174 is modified to N6-acetyllysine; alternate. Position 174 is an N6-succinyllysine; alternate (Lys-174). Residues Lys-278, Lys-378, Lys-392, and Lys-535 each carry the N6-succinyllysine modification. 2 positions are modified to N6-acetyllysine: Lys-560 and Lys-776. Residue Tyr-778 is modified to Phosphotyrosine. Lys-803, Lys-885, and Lys-905 each carry N6-acetyllysine; alternate. Lys-803, Lys-885, and Lys-905 each carry N6-succinyllysine; alternate.

This sequence belongs to the GcvT family. Requires FAD as cofactor.

It is found in the mitochondrion matrix. The enzyme catalyses (6S)-5,6,7,8-tetrahydrofolyl-(gamma-L-Glu)(n) + sarcosine + oxidized [electron-transfer flavoprotein] + H(+) = (6R)-5,10-methylenetetrahydrofolyl-(gamma-L-Glu)(n) + reduced [electron-transfer flavoprotein] + glycine. It functions in the pathway amine and polyamine degradation; sarcosine degradation; formaldehyde and glycine from sarcosine: step 1/1. Functionally, catalyzes the last step of the oxidative degradation of choline to glycine. Converts sarcosine into glycine. This is Sarcosine dehydrogenase, mitochondrial from Mus musculus (Mouse).